The sequence spans 395 residues: Fe(3+) ions import ATP-binding protein FbpC 2 (395 aa).

The tract at residues 1–21 is disordered; the sequence is MHIAQELADETCNSPRGAGHA. The 242-residue stretch at 23 to 264 folds into the ABC transporter domain; the sequence is LRYPSDRRTA…PKTLFVADFI (242 aa). 66–73 contributes to the ATP binding site; sequence GPSGCGKT.

The protein belongs to the ABC transporter superfamily. Fe(3+) ion importer (TC 3.A.1.10) family. In terms of assembly, the complex is composed of two ATP-binding proteins (FbpC), two transmembrane proteins (FbpB) and a solute-binding protein (FbpA).

It is found in the cell inner membrane. The enzyme catalyses Fe(3+)(out) + ATP + H2O = Fe(3+)(in) + ADP + phosphate + H(+). Functionally, part of the ABC transporter complex FbpABC involved in Fe(3+) ions import. Responsible for energy coupling to the transport system. The sequence is that of Fe(3+) ions import ATP-binding protein FbpC 2 from Rhizobium meliloti (strain 1021) (Ensifer meliloti).